Here is a 381-residue protein sequence, read N- to C-terminus: N-acetyldiaminopimelate deacetylase (381 aa).

Residue D73 is part of the active site. The active-site Proton acceptor is E132.

The protein belongs to the peptidase M20A family. N-acetyldiaminopimelate deacetylase subfamily.

The enzyme catalyses N-acetyl-(2S,6S)-2,6-diaminopimelate + H2O = (2S,6S)-2,6-diaminopimelate + acetate. It participates in amino-acid biosynthesis; L-lysine biosynthesis via DAP pathway; LL-2,6-diaminopimelate from (S)-tetrahydrodipicolinate (acetylase route): step 3/3. Functionally, catalyzes the conversion of N-acetyl-diaminopimelate to diaminopimelate and acetate. This Limosilactobacillus reuteri (strain DSM 20016) (Lactobacillus reuteri) protein is N-acetyldiaminopimelate deacetylase.